A 198-amino-acid polypeptide reads, in one-letter code: MDLKKLEGIFEGMLFASGDKVSIEKLSSITGIDKKTVKLVINNMIVKYNNDPSRGITIREINNGYQLCSKPEYYDYIKQLFEPKQRSGLSQAALETLAIIAYNRPITKAKIEQIRGVNSDSAITKLLEKNLIREAGRLDAPGKPVLYETTDEFFRSFGFKSDADLPIFELNDIHETVEINQNSEQEKADTELEKQEKA.

This sequence belongs to the ScpB family. Homodimer. Homodimerization may be required to stabilize the binding of ScpA to the Smc head domains. Component of a cohesin-like complex composed of ScpA, ScpB and the Smc homodimer, in which ScpA and ScpB bind to the head domain of Smc. The presence of the three proteins is required for the association of the complex with DNA.

It is found in the cytoplasm. Functionally, participates in chromosomal partition during cell division. May act via the formation of a condensin-like complex containing Smc and ScpA that pull DNA away from mid-cell into both cell halves. The sequence is that of Segregation and condensation protein B from Acetivibrio thermocellus (strain ATCC 27405 / DSM 1237 / JCM 9322 / NBRC 103400 / NCIMB 10682 / NRRL B-4536 / VPI 7372) (Clostridium thermocellum).